Consider the following 212-residue polypeptide: Thymidine kinase (212 aa).

ATP contacts are provided by residues 16–23 (GPMFSGKS) and 99–102 (DEAQ). Glu100 acts as the Proton acceptor in catalysis.

The protein belongs to the thymidine kinase family. In terms of assembly, homotetramer.

It is found in the cytoplasm. It carries out the reaction thymidine + ATP = dTMP + ADP + H(+). In Deinococcus radiodurans (strain ATCC 13939 / DSM 20539 / JCM 16871 / CCUG 27074 / LMG 4051 / NBRC 15346 / NCIMB 9279 / VKM B-1422 / R1), this protein is Thymidine kinase.